Here is a 276-residue protein sequence, read N- to C-terminus: Glucosamine-6-phosphate deaminase 2 (276 aa).

Aspartate 72 acts as the Proton acceptor; for enolization step in catalysis. A coiled-coil region spans residues 105–130; that stretch reads HILDGNAADLQAECDAFENKIKEAGG. Residue aspartate 141 is the For ring-opening step of the active site. Histidine 143 functions as the Proton acceptor; for ring-opening step in the catalytic mechanism. The For ring-opening step role is filled by glutamate 148. Threonine 161 carries the post-translational modification Phosphothreonine.

This sequence belongs to the glucosamine/galactosamine-6-phosphate isomerase family. As to quaternary structure, homohexamer. In terms of tissue distribution, ubiquitous, with highest expression detected in testis, ovary, placenta, and heart.

Its subcellular location is the cytoplasm. It carries out the reaction alpha-D-glucosamine 6-phosphate + H2O = beta-D-fructose 6-phosphate + NH4(+). It functions in the pathway nucleotide-sugar biosynthesis; UDP-N-acetyl-alpha-D-glucosamine biosynthesis; alpha-D-glucosamine 6-phosphate from D-fructose 6-phosphate: step 1/1. With respect to regulation, allosterically activated by N-acetylglucosamine-6-phosphate (GlcNAc6P). Functionally, catalyzes the reversible conversion of alpha-D-glucosamine 6-phosphate (GlcN-6P) into beta-D-fructose 6-phosphate (Fru-6P) and ammonium ion, a regulatory reaction step in de novo uridine diphosphate-N-acetyl-alpha-D-glucosamine (UDP-GlcNAc) biosynthesis via hexosamine pathway. Deamination is coupled to aldo-keto isomerization mediating the metabolic flux from UDP-GlcNAc toward Fru-6P. At high ammonium level can drive amination and isomerization of Fru-6P toward hexosamines and UDP-GlcNAc synthesis. Has a role in fine tuning the metabolic fluctuations of cytosolic UDP-GlcNAc and their effects on hyaluronan synthesis that occur during tissue remodeling. The polypeptide is Glucosamine-6-phosphate deaminase 2 (Homo sapiens (Human)).